Consider the following 544-residue polypeptide: (E,E)-germacrene B synthase (544 aa).

3 residues coordinate Mg(2+): aspartate 296, aspartate 300, and glutamate 449. The DDXXD motif motif lies at 296 to 300; that stretch reads DDTFD.

It belongs to the terpene synthase family. It depends on Mg(2+) as a cofactor. Requires Mn(2+) as cofactor.

The protein localises to the cytoplasm. The enzyme catalyses (2E,6E)-farnesyl diphosphate = (1E,4E)-germacrene B + diphosphate. It functions in the pathway secondary metabolite biosynthesis; terpenoid biosynthesis. Its function is as follows. Involved in the biosynthesis of germacrene B. In Solanum habrochaites (Wild tomato), this protein is (E,E)-germacrene B synthase (SSTLH1).